Reading from the N-terminus, the 127-residue chain is MRYGEKEIKEFDVENMEVWPNDAKNDYVIKITLPEFMCCCPRSGYPDFATIYLEYIPNKLVVELKAIKLYINTFMYRNVSHEASINEIYNTLKEKLDPKWIKVVGDFNPRGNVHTVIECRSDLVVPQ.

Cysteine 40 functions as the Thioimide intermediate in the catalytic mechanism. The Proton donor role is filled by aspartate 47. Substrate contacts are provided by residues 62-64 and 81-82; these read VEL and HE.

It belongs to the GTP cyclohydrolase I family. QueF type 1 subfamily.

It is found in the cytoplasm. The enzyme catalyses 7-aminomethyl-7-carbaguanine + 2 NADP(+) = 7-cyano-7-deazaguanine + 2 NADPH + 3 H(+). Its pathway is tRNA modification; tRNA-queuosine biosynthesis. In terms of biological role, catalyzes the NADPH-dependent reduction of 7-cyano-7-deazaguanine (preQ0) to 7-aminomethyl-7-deazaguanine (preQ1). The chain is NADPH-dependent 7-cyano-7-deazaguanine reductase from Campylobacter lari (strain RM2100 / D67 / ATCC BAA-1060).